The primary structure comprises 235 residues: MKNFSKRMTTLLSKVEERSYSPIEAIKLVKENANAKFDETIEAHIRLGIDPKYTDQQLRTTVALPSGTGQKIRIAVVTRGEKVNEATKAGADLAGEEDLVDSINKGEMNFDLLISTPDMMPKVAKLGRVLGPRGLMPNPKAGTVTTDLEGAIKEFKAGKLEFRADKAGIVHVRFGKASFSEEALLENLKTLQTTIEKNKPSGAKGKFWRSFFITSTMGPSVEVDINELQDLQKEK.

Belongs to the universal ribosomal protein uL1 family. Part of the 50S ribosomal subunit.

Binds directly to 23S rRNA. The L1 stalk is quite mobile in the ribosome, and is involved in E site tRNA release. Functionally, protein L1 is also a translational repressor protein, it controls the translation of the L11 operon by binding to its mRNA. In Prochlorococcus marinus (strain NATL1A), this protein is Large ribosomal subunit protein uL1.